Reading from the N-terminus, the 223-residue chain is Probable transaldolase (223 aa).

The Schiff-base intermediate with substrate role is filled by Lys91.

It belongs to the transaldolase family. Type 3B subfamily.

Its subcellular location is the cytoplasm. The catalysed reaction is D-sedoheptulose 7-phosphate + D-glyceraldehyde 3-phosphate = D-erythrose 4-phosphate + beta-D-fructose 6-phosphate. It participates in carbohydrate degradation; pentose phosphate pathway; D-glyceraldehyde 3-phosphate and beta-D-fructose 6-phosphate from D-ribose 5-phosphate and D-xylulose 5-phosphate (non-oxidative stage): step 2/3. Its function is as follows. Transaldolase is important for the balance of metabolites in the pentose-phosphate pathway. This is Probable transaldolase from Prosthecochloris aestuarii (strain DSM 271 / SK 413).